Consider the following 231-residue polypeptide: Red fluorescent protein eqFP611 (231 aa).

The 2-iminomethyl-5-imidazolinone (Met-Gly) cross-link spans 63 to 65 (MYG). (E)-2,3-didehydrotyrosine is present on Tyr64.

Belongs to the GFP family. In terms of assembly, monomer. Post-translationally, contains a chromophore consisting of modified amino acid residues. The chromophore is formed by autocatalytic backbone condensation between Xaa-N and Gly-(N+2), oxidation of Tyr-(N+1) to didehydrotyrosine, and formation of a double bond to the alpha-amino nitrogen of residue Xaa-N. Maturation of the chromophore requires nothing other than molecular oxygen.

Pigment protein. In Entacmaea quadricolor (Bubble-tip anemone), this protein is Red fluorescent protein eqFP611.